A 150-amino-acid chain; its full sequence is 16.6 kDa heat shock protein (150 aa).

Residues 31–150 (AERCPVLTNV…PQLKAIPISG (120 aa)) form the sHSP domain.

It belongs to the small heat shock protein (HSP20) family. In terms of assembly, may form oligomeric structures.

It is found in the cytoplasm. In Oryza sativa subsp. japonica (Rice), this protein is 16.6 kDa heat shock protein (HSP16.6).